The chain runs to 304 residues: Sulfate adenylyltransferase subunit 2 (304 aa).

It belongs to the PAPS reductase family. CysD subfamily. Heterodimer composed of CysD, the smaller subunit, and CysNC.

The enzyme catalyses sulfate + ATP + H(+) = adenosine 5'-phosphosulfate + diphosphate. The protein operates within sulfur metabolism; hydrogen sulfide biosynthesis; sulfite from sulfate: step 1/3. With CysN forms the ATP sulfurylase (ATPS) that catalyzes the adenylation of sulfate producing adenosine 5'-phosphosulfate (APS) and diphosphate, the first enzymatic step in sulfur assimilation pathway. APS synthesis involves the formation of a high-energy phosphoric-sulfuric acid anhydride bond driven by GTP hydrolysis by CysN coupled to ATP hydrolysis by CysD. In Xylella fastidiosa (strain Temecula1 / ATCC 700964), this protein is Sulfate adenylyltransferase subunit 2.